The sequence spans 157 residues: Transcriptional repressor NrdR (157 aa).

A zinc finger spans residues 3–34 (CPFCGHEDTQVKDSRPTDDGTAIRRRRSCTAC). An ATP-cone domain is found at 49 to 139 (LIVVKTDQRR…VYRNFSDAGD (91 aa)).

The protein belongs to the NrdR family. Requires Zn(2+) as cofactor.

Negatively regulates transcription of bacterial ribonucleotide reductase nrd genes and operons by binding to NrdR-boxes. This chain is Transcriptional repressor NrdR, found in Granulibacter bethesdensis (strain ATCC BAA-1260 / CGDNIH1).